A 696-amino-acid chain; its full sequence is Two-component response regulator ORR22 (696 aa).

In terms of domain architecture, Response regulatory spans 27-142; the sequence is RVLAVDDDPV…ELRNIWQHVV (116 aa). 4-aspartylphosphate is present on Asp-78. The disordered stretch occupies residues 154–214; it reads LDFSKECNKP…DYQENDEPSA (61 aa). Positions 176–185 are enriched in polar residues; sequence TCGSSDQNGR. The span at 195 to 211 shows a compositional bias: acidic residues; that stretch reads GEDDDEGDDNDYQENDE. Positions 214–273 form a DNA-binding region, myb-like GARP; it reads AAKKPRVVWSVELHRKFVAAVNQLGIDKAVPKRILELMNVEKLTRENVASHLQKYRLYLK.

Belongs to the ARR family. Type-B subfamily. Post-translationally, two-component system major event consists of a His-to-Asp phosphorelay between a sensor histidine kinase (HK) and a response regulator (RR). In plants, the His-to-Asp phosphorelay involves an additional intermediate named Histidine-containing phosphotransfer protein (HPt). This multistep phosphorelay consists of a His-Asp-His-Asp sequential transfer of a phosphate group between first a His and an Asp of the HK protein, followed by the transfer to a conserved His of the HPt protein and finally the transfer to an Asp in the receiver domain of the RR protein.

The protein localises to the nucleus. Its function is as follows. Transcriptional activator that binds specific DNA sequence. Functions as a response regulator involved in His-to-Asp phosphorelay signal transduction system. Phosphorylation of the Asp residue in the receiver domain activates the ability of the protein to promote the transcription of target genes. May directly activate some type-A response regulators in response to cytokinins. Functions as a response regulator in response to cytokinins. The sequence is that of Two-component response regulator ORR22 from Oryza sativa subsp. japonica (Rice).